A 355-amino-acid chain; its full sequence is Eukaryotic initiation factor 4A-13 (355 aa).

A Q motif motif is present at residues 40–68 (DSFDAMGLQENLLRGIYAYGFEKPSAIQQ). Residues 71 to 241 (IVPFCKGLDV…RKFMNQPVRI (171 aa)) form the Helicase ATP-binding domain. ATP is bound at residue 84–91 (AQSGTGKT). The DEAD box motif lies at 189–192 (DEAD). Residues 252–355 (GIKQFYVNVD…QQVSLVINYD (104 aa)) form the Helicase C-terminal domain.

Belongs to the DEAD box helicase family. eIF4A subfamily. EIF4F is a multi-subunit complex, the composition of which varies with external and internal environmental conditions. It is composed of at least EIF4A, EIF4E and EIF4G.

The catalysed reaction is ATP + H2O = ADP + phosphate + H(+). Its function is as follows. ATP-dependent RNA helicase which is a subunit of the eIF4F complex involved in cap recognition and is required for mRNA binding to ribosome. In the current model of translation initiation, eIF4A unwinds RNA secondary structures in the 5'-UTR of mRNAs which is necessary to allow efficient binding of the small ribosomal subunit, and subsequent scanning for the initiator codon. The protein is Eukaryotic initiation factor 4A-13 of Nicotiana tabacum (Common tobacco).